The sequence spans 344 residues: MLQALLDSKDFLALTLAHPEQFDGEFSFSLGDHTQVEVWDTGVIVFEPAQNEGKDVVLSCGVHGNETAPIELCNGLIKQLLQQKIIAKQRTLFLIGNPLAINNGTRIIDENMNRLFSGEHSNPPGLVNPERVRAKKLEAYIDRFYTAVADGRQRIHYDLHTAMRASKHEKFAIYPYRPGRAFSGEQIMFLAASGVDTVLFHHEPTTTFSYFSSERYGADAFTIELGKVYPMGQNDMTRFIATHEMFMRLITAKPLELDAFDADKVNLYQVCRVINKHFDDFEFTFATDVENFRSFPKGFVLAREGGQEIKVEHEFESVVFPNAKVPIGNRTVICLIPAVNADVR.

Residues H63, E66, and H160 each contribute to the Zn(2+) site. The active site involves E224.

Belongs to the AspA/AstE family. Succinylglutamate desuccinylase subfamily. Zn(2+) serves as cofactor.

It catalyses the reaction N-succinyl-L-glutamate + H2O = L-glutamate + succinate. The protein operates within amino-acid degradation; L-arginine degradation via AST pathway; L-glutamate and succinate from L-arginine: step 5/5. Transforms N(2)-succinylglutamate into succinate and glutamate. The sequence is that of Succinylglutamate desuccinylase from Shewanella baltica (strain OS223).